Here is a 611-residue protein sequence, read N- to C-terminus: Solute carrier family 23 member 3 (611 aa).

The Cytoplasmic portion of the chain corresponds to 1-52 (MSRSPLHPIPLLSEGYQDTPAPLPPLLPPLQNPSSRSWASRVFGPSTWGLSC). Residues 53–73 (LLALQHFLVLASLLWASHLLL) form a helical membrane-spanning segment. At 74–88 (LHGLPPGGLSYPPAQ) the chain is on the extracellular side. Residues 89-109 (LLASSFFSCGLSTVLQTWMGS) form a helical membrane-spanning segment. Topologically, residues 110–168 (RLPLIQAPSLEFLIPALVLTNQKLPLTTKTPGNASLSLPLCSLTRSCHGLELWNTSLRE) are cytoplasmic. A helical membrane pass occupies residues 169–189 (VSGAVVVSGLLQGTIGLLGVP). Over 190 to 191 (GR) the chain is Extracellular. Residues 192–212 (VFPYCGPLVLAPSLVVAGLSA) form a helical membrane-spanning segment. Residues 213–215 (HKE) lie on the Cytoplasmic side of the membrane. The chain crosses the membrane as a helical span at residues 216-236 (VAQFCSAHWGLALLLILLMVV). Topologically, residues 237-269 (CSQHLGSCQIPLCSWRPSSTSTHICIPVFRLLS) are extracellular. A helical transmembrane segment spans residues 270-290 (VLAPVACVWFISAFVGTSVIP). The Cytoplasmic portion of the chain corresponds to 291-319 (LQLSEPSDAPWFWLPHPGEWEWPLLTPRA). A helical membrane pass occupies residues 320–340 (LAAGISMALAASTSSLGCYAL). The Extracellular segment spans residues 341 to 358 (CGQLLRLSPPPPHACSRG). Residues 359–379 (LSLEGLGSVLAGLLGSPLGTA) traverse the membrane as a helical segment. At 380-397 (SSFPNVGTVSLFQTGSRR) the chain is on the cytoplasmic side. The helical transmembrane segment at 398 to 417 (VAHLVGLFCMGLGLSPRLAQ) threads the bilayer. Topologically, residues 418–426 (LFTSIPLPV) are extracellular. A helical transmembrane segment spans residues 427 to 449 (LGGVLGVTQAVVLSAGFSSFHLA). Topologically, residues 450–455 (DIDSGR) are cytoplasmic. Residues 456-475 (NVFIVGFSIFMALLLPRWLR) form a helical membrane-spanning segment. Topologically, residues 476 to 489 (EAPVLLNTGWSPLD) are extracellular. A helical transmembrane segment spans residues 490-510 (MFLRSLLAEPIFLAGLLGFLL). The Cytoplasmic portion of the chain corresponds to 511–611 (ENTISGTRAE…TASREGVRSQ (101 aa)). A disordered region spans residues 574–611 (PEDSGDEGGSSKTGERADLLPNSGESYSTASREGVRSQ). Polar residues predominate over residues 596–605 (SGESYSTASR).

It belongs to the nucleobase:cation symporter-2 (NCS2) (TC 2.A.40) family.

It localises to the membrane. Its subcellular location is the cytoplasm. It catalyses the reaction hypoxanthine(out) + Na(+)(out) = hypoxanthine(in) + Na(+)(in). Acts as a sodium-dependent hypoxanthine transporter. May show xanthine-hypoxanthine exchange activity. This is Solute carrier family 23 member 3 (Slc23a3) from Mus musculus (Mouse).